The following is a 207-amino-acid chain: Granulocyte colony-stimulating factor (207 aa).

The signal sequence occupies residues 1–30 (MAGPATQSPMKLMALQLLLWHSALWTVQEA). 2 disulfides stabilise this stretch: cysteine 69–cysteine 75 and cysteine 97–cysteine 107. Threonine 166 carries O-linked (GalNAc...) threonine glycosylation.

It belongs to the IL-6 superfamily. As to quaternary structure, monomer. Post-translationally, O-glycan consists of Gal-GalNAc disaccharide which can be modified with up to two sialic acid residues (done in recombinantly expressed G-CSF from CHO cells).

It localises to the secreted. Its function is as follows. Granulocyte/macrophage colony-stimulating factors are cytokines that act in hematopoiesis by controlling the production, differentiation, and function of 2 related white cell populations of the blood, the granulocytes and the monocytes-macrophages. This CSF induces granulocytes. In Homo sapiens (Human), this protein is Granulocyte colony-stimulating factor (CSF3).